We begin with the raw amino-acid sequence, 161 residues long: Nucleotide-binding protein swp_1151 (161 aa).

The protein belongs to the YajQ family.

Nucleotide-binding protein. This is Nucleotide-binding protein swp_1151 from Shewanella piezotolerans (strain WP3 / JCM 13877).